Reading from the N-terminus, the 241-residue chain is Lipopolysaccharide export system ATP-binding protein LptB (241 aa).

An ABC transporter domain is found at 4-237 (LTAENLAKSY…EQVKRVYLGE (234 aa)). Position 36–43 (36–43 (GPNGAGKT)) interacts with ATP.

The protein belongs to the ABC transporter superfamily. Outer membrane lipopolysaccharide export (TC 1.B.42) family. As to quaternary structure, component of the lipopolysaccharide transport and assembly complex. The LptBFG transporter is composed of two ATP-binding proteins (LptB) and two transmembrane proteins (LptF and LptG).

It localises to the cytoplasm. The protein localises to the cell inner membrane. In terms of biological role, part of the ABC transporter complex LptBFG involved in the translocation of lipopolysaccharide (LPS) from the inner membrane to the outer membrane. Probably responsible for energy coupling to the transport system. In Haemophilus influenzae (strain ATCC 51907 / DSM 11121 / KW20 / Rd), this protein is Lipopolysaccharide export system ATP-binding protein LptB (lptB).